A 203-amino-acid chain; its full sequence is V-type ATP synthase subunit D (203 aa).

This sequence belongs to the V-ATPase D subunit family.

Its function is as follows. Produces ATP from ADP in the presence of a proton gradient across the membrane. This Chlamydia muridarum (strain MoPn / Nigg) protein is V-type ATP synthase subunit D (atpD).